The sequence spans 837 residues: V-type proton ATPase 116 kDa subunit a 1 (837 aa).

Over 1–388 (MGELFRSEEM…DAYGIGSYRE (388 aa)) the chain is Cytoplasmic. A helical transmembrane segment spans residues 389-407 (INPAPYTIITFPFLFAVMF). Residues 408–409 (GD) lie on the Vacuolar side of the membrane. Residues 410–426 (FGHGILMTLFAVWMVVR) traverse the membrane as a helical segment. Residues 427-441 (ESRILSQKIDNELFT) lie on the Cytoplasmic side of the membrane. The chain crosses the membrane as a helical span at residues 442–471 (MMFSGRYIILLMGLFSIYTGLIYNDCFSKA). Residues 472–534 (LNLFGSSWSV…ATNKLTFLNS (63 aa)) lie on the Vacuolar side of the membrane. The chain crosses the membrane as a helical span at residues 535–554 (FKMKMSVVLGIIHMTFGVAL). Residues 555-572 (SLLNHIYFKKPLNIYLGF) are Cytoplasmic-facing. The helical transmembrane segment at 573–593 (IPEMIFMTTLFGYLVILIIYK) threads the bilayer. The Vacuolar portion of the chain corresponds to 594–638 (WCAYDASTSMVAPSLLIHFINMFLFSYQDTSLPMLYKGQMGLQCF). The helical transmembrane segment at 639–658 (LVVCAIICVPWMLVVKPLIL) threads the bilayer. Topologically, residues 659 to 724 (RRQYLRRKHL…DTVVHQAIHT (66 aa)) are cytoplasmic. Residues 725–749 (IEYCLGCISNTASYLRLWALSLAHA) form a helical membrane-spanning segment. The Vacuolar segment spans residues 750–770 (QLSEVLWTMVMHVGLSIRSLG). Residues 771 to 809 (GGIALVFVFSAFATLTIAILLIMEGLSAFLHALRLHWVE) form a helical membrane-spanning segment. The Cytoplasmic portion of the chain corresponds to 810 to 837 (FQNKFYMGTGFKFLPFSFENIREGKFDE).

It belongs to the V-ATPase 116 kDa subunit family. In terms of assembly, V-ATPase is a heteromultimeric enzyme made up of two complexes: the ATP-hydrolytic V1 complex and the proton translocation V0 complex. The V1 complex consists of three catalytic AB heterodimers that form a heterohexamer, three peripheral stalks each consisting of EG heterodimers, one central rotor including subunits D and F, and the regulatory subunits C and H. The proton translocation complex V0 consists of the proton transport subunit a, a ring of proteolipid subunits c9c'', rotary subunit d, subunits e and f, and two accessory subunits.

It localises to the cytoplasmic vesicle. Its subcellular location is the clathrin-coated vesicle membrane. The protein localises to the secretory vesicle. It is found in the synaptic vesicle membrane. The protein resides in the melanosome. Its function is as follows. Subunit of the V0 complex of vacuolar(H+)-ATPase (V-ATPase), a multisubunit enzyme composed of a peripheral complex (V1) that hydrolyzes ATP and a membrane integral complex (V0) that translocates protons. V-ATPase is responsible for acidifying and maintaining the pH of intracellular compartments and in some cell types, is targeted to the plasma membrane, where it is responsible for acidifying the extracellular environment. Required for assembly and activity of the vacuolar ATPase. This Xenopus tropicalis (Western clawed frog) protein is V-type proton ATPase 116 kDa subunit a 1 (atp6v0a1).